The sequence spans 193 residues: uncharacterized protein (193 aa).

A helical transmembrane segment spans residues 119-143 (LAGSLLAATGMTLGIFGMGITGTCW).

It is found in the mitochondrion membrane. This is an uncharacterized protein from Saccharomyces cerevisiae (strain ATCC 204508 / S288c) (Baker's yeast).